The sequence spans 434 residues: AT-rich interactive domain-containing protein 5 (434 aa).

A disordered region spans residues 1 to 120 (MMADTEMQEQ…SSPHVPEESV (120 aa)). 3 stretches are compositionally biased toward basic and acidic residues: residues 25–37 (ELEK…ERPK), 43–54 (DTTHTLDSDVHL), and 78–90 (RNGD…KKIT). Residues 92–102 (DGGQEETTLGE) show a composition bias toward polar residues. Residues 142–233 (PQDQEAFIKE…ALLEYEKHLR (92 aa)) enclose the ARID domain. The tract at residues 237-274 (ELNLPGSASLPSSGIEKEASSHQASGSGRTRRDAAARA) is disordered. A sHSP domain is found at 336–434 (AEVIDVGPPA…RLFVRVPFEQ (99 aa)).

Belongs to the small heat shock protein (HSP20) family.

The protein localises to the nucleus. This Arabidopsis thaliana (Mouse-ear cress) protein is AT-rich interactive domain-containing protein 5 (ARID5).